Here is a 449-residue protein sequence, read N- to C-terminus: UDP-N-acetylmuramoylalanine--D-glutamate ligase (449 aa).

118 to 124 (GTNGKTT) contacts ATP.

Belongs to the MurCDEF family.

The protein resides in the cytoplasm. The enzyme catalyses UDP-N-acetyl-alpha-D-muramoyl-L-alanine + D-glutamate + ATP = UDP-N-acetyl-alpha-D-muramoyl-L-alanyl-D-glutamate + ADP + phosphate + H(+). Its pathway is cell wall biogenesis; peptidoglycan biosynthesis. In terms of biological role, cell wall formation. Catalyzes the addition of glutamate to the nucleotide precursor UDP-N-acetylmuramoyl-L-alanine (UMA). The sequence is that of UDP-N-acetylmuramoylalanine--D-glutamate ligase from Staphylococcus haemolyticus (strain JCSC1435).